We begin with the raw amino-acid sequence, 213 residues long: StAR-related lipid transfer protein 5 (213 aa).

The START domain occupies 1–213 (MDPSWATQES…LQKAVRKFHH (213 aa)).

As to expression, expressed in most tissues, with highest levels in liver and in kidney.

Its function is as follows. May be involved in the intracellular transport of sterols or other lipids. May bind cholesterol or other sterols. In Mus musculus (Mouse), this protein is StAR-related lipid transfer protein 5 (Stard5).